The primary structure comprises 69 residues: Conotoxin Eb6.9 (69 aa).

An N-terminal signal peptide occupies residues 1–17; the sequence is VLIIAVLFLTACQLTTA. Positions 18–41 are excised as a propeptide; sequence ETYSRGRQKHRARRSTDKNSKWTR. 3 cysteine pairs are disulfide-bonded: cysteine 43–cysteine 57, cysteine 50–cysteine 61, and cysteine 56–cysteine 68.

This sequence belongs to the conotoxin O1 superfamily. Expressed by the venom duct.

It is found in the secreted. In Conus ebraeus (Hebrew cone), this protein is Conotoxin Eb6.9 (E1).